A 262-amino-acid polypeptide reads, in one-letter code: MWKLYVAALPANGWNWIAVWRRNYLAWKKVALASILGNLADPLIYLFGLGAGLGMMVGRVDGVSYIAFLSAGMVATSAMTASTFETIYATFARMRAQRTWEAILHTQVTIGDIVLGELAWAATKASLAGTGIGVVAATLGYTEWVSLLYALPVIALTGLAFASLAMIVTALAPSYEYFIFYQTLVITPMLFLSGAVFPVNQLPGAFQHVTRILPLAHSIDVIRPIMLGSPLVHVGLHIGALCCYAVVPFFLSTALLRRRLMP.

The ABC transmembrane type-2 domain occupies 33-259; the sequence is ASILGNLADP…FLSTALLRRR (227 aa). 7 helical membrane passes run 35–55, 62–82, 102–122, 127–147, 148–168, 177–197, and 231–251; these read ILGN…GLGM, GVSY…MTAS, AILH…AWAA, LAGT…WVSL, LYAL…AMIV, YFIF…GAVF, and LVHV…PFFL.

Belongs to the ABC-2 integral membrane protein family. Lipooligosaccharide exporter (TC 3.A.1.102) subfamily. As to quaternary structure, the complex is composed of two ATP-binding proteins (NodI) and two transmembrane proteins (NodJ).

It localises to the cell inner membrane. Its function is as follows. Part of the ABC transporter complex NodIJ involved in the export of the nodulation factors (Nod factors), the bacterial signal molecules that induce symbiosis and subsequent nodulation induction. Nod factors are LCO (lipo-chitin oligosaccharide), a modified beta-1,4-linked N-acetylglucosamine oligosaccharide. This subunit encodes the transporter. The chain is Nodulation protein J (nodJ) from Rhizobium meliloti (strain 1021) (Ensifer meliloti).